We begin with the raw amino-acid sequence, 291 residues long: ATP synthase subunit a (291 aa).

Transmembrane regions (helical) follow at residues 50 to 70 (LDSMGWSIGLGVIFCLLFWIV), 108 to 128 (IAPLALTIFVWIFLMNLMDLI), 161 to 181 (DPNITLGMSLSVFVLILFYSI), 203 to 223 (PVAKALLIPVNLILELVTFLA), 241 to 261 (LIFILIALLPFWIQWALSVPW), and 262 to 282 (AIFHILVITLQAFIFMMLTIV).

The protein belongs to the ATPase A chain family. F-type ATPases have 2 components, CF(1) - the catalytic core - and CF(0) - the membrane proton channel. CF(1) has five subunits: alpha(3), beta(3), gamma(1), delta(1), epsilon(1). CF(0) has three main subunits: a(1), b(2) and c(9-12). The alpha and beta chains form an alternating ring which encloses part of the gamma chain. CF(1) is attached to CF(0) by a central stalk formed by the gamma and epsilon chains, while a peripheral stalk is formed by the delta and b chains.

The protein resides in the cell inner membrane. Functionally, key component of the proton channel; it plays a direct role in the translocation of protons across the membrane. In Acinetobacter baumannii (strain SDF), this protein is ATP synthase subunit a.